We begin with the raw amino-acid sequence, 159 residues long: Phosphopantetheine adenylyltransferase (159 aa).

Ser-9 contacts substrate. ATP-binding positions include 9-10 (SF) and His-17. Substrate-binding residues include Lys-41, Leu-73, and Lys-87. ATP contacts are provided by residues 88–90 (GLR), Glu-98, and 123–129 (NIHISSS).

It belongs to the bacterial CoaD family. As to quaternary structure, homohexamer. The cofactor is Mg(2+).

It localises to the cytoplasm. It carries out the reaction (R)-4'-phosphopantetheine + ATP + H(+) = 3'-dephospho-CoA + diphosphate. The protein operates within cofactor biosynthesis; coenzyme A biosynthesis; CoA from (R)-pantothenate: step 4/5. Functionally, reversibly transfers an adenylyl group from ATP to 4'-phosphopantetheine, yielding dephospho-CoA (dPCoA) and pyrophosphate. The chain is Phosphopantetheine adenylyltransferase from Clostridium beijerinckii (strain ATCC 51743 / NCIMB 8052) (Clostridium acetobutylicum).